The following is a 182-amino-acid chain: UPF0301 protein MCA0413 1 (182 aa).

The protein belongs to the UPF0301 (AlgH) family.

The chain is UPF0301 protein MCA0413 1 from Methylococcus capsulatus (strain ATCC 33009 / NCIMB 11132 / Bath).